A 526-amino-acid chain; its full sequence is Dual specificity tyrosine-phosphorylation-regulated kinase 2 (526 aa).

2 stretches are compositionally biased toward polar residues: residues 30–40 (TTQPNGLTTLG) and 60–70 (GSSSSLKSTDG). Positions 30–76 (TTQPNGLTTLGKSGLPVVQDRQSESAHRRQGSSSSLKSTDGTGKVKA) are disordered. Threonine 31 carries the post-translational modification Phosphothreonine; by ATM. The Nuclear localization signal signature appears at 114 to 116 (KKR). The region spanning 147–460 (YEVLKVIGKG…PSQALRHPWL (314 aa)) is the Protein kinase domain. ATP-binding positions include 153–161 (IGKGSFGQV), lysine 176, and 226–229 (FELL). Catalysis depends on aspartate 273, which acts as the Proton acceptor. A Phosphotyrosine modification is found at tyrosine 307. Residue serine 367 is modified to Phosphoserine; by ATM. The segment at 462-499 (RRLPKPPTGEKASAKRITESTGAITSISKLPPTSSSAS) is disordered. Residues 480–499 (ESTGAITSISKLPPTSSSAS) show a composition bias toward polar residues.

This sequence belongs to the protein kinase superfamily. CMGC Ser/Thr protein kinase family. MNB/DYRK subfamily. In terms of assembly, interacts with MDM2. It depends on Mg(2+) as a cofactor. Requires Mn(2+) as cofactor. In terms of processing, phosphorylated on serine/threonine residues. Phosphorylation on Thr-31 and Ser-367 by ATM in response to genotoxic stress disrupts MDM2 binding and prevents MDM2-mediated ubiquitination and subsequent proteasome degradation, thus promoting p53/TP53-mediated apoptosis. Ubiquitination in nucleus by MDM2 in normal conditions leads to proteasome degradation.

The protein resides in the cytoplasm. It localises to the nucleus. The enzyme catalyses L-seryl-[protein] + ATP = O-phospho-L-seryl-[protein] + ADP + H(+). The catalysed reaction is L-threonyl-[protein] + ATP = O-phospho-L-threonyl-[protein] + ADP + H(+). It carries out the reaction L-tyrosyl-[protein] + ATP = O-phospho-L-tyrosyl-[protein] + ADP + H(+). With respect to regulation, autophosphorylates on tyrosine residues. In terms of biological role, serine/threonine-protein kinase involved in the control of mitotic transition and the regulation of cellular growth and/or development. This Gallus gallus (Chicken) protein is Dual specificity tyrosine-phosphorylation-regulated kinase 2.